Consider the following 892-residue polypeptide: Translation initiation factor IF-2 (892 aa).

Residues 88 to 304 (KKRTFVKRDP…SSLQQGFQKP (217 aa)) form a disordered region. Basic and acidic residues-rich tracts occupy residues 93–159 (VKRD…KDKV) and 166–216 (DMTK…EENK). The span at 254 to 269 (GRGRNAKAARPAKKGK) shows a compositional bias: basic residues. Over residues 270–282 (HAESKADREEARA) the composition is skewed to basic and acidic residues. In terms of domain architecture, tr-type G spans 391 to 560 (PRAPVVTIMG…LLQAEVLELK (170 aa)). The tract at residues 400 to 407 (GHVDHGKT) is G1. 400–407 (GHVDHGKT) serves as a coordination point for GTP. The tract at residues 425–429 (GITQH) is G2. The G3 stretch occupies residues 446–449 (DTPG). Residues 446–450 (DTPGH) and 500–503 (NKID) contribute to the GTP site. Residues 500-503 (NKID) form a G4 region. The segment at 536 to 538 (SAK) is G5.

The protein belongs to the TRAFAC class translation factor GTPase superfamily. Classic translation factor GTPase family. IF-2 subfamily.

It localises to the cytoplasm. One of the essential components for the initiation of protein synthesis. Protects formylmethionyl-tRNA from spontaneous hydrolysis and promotes its binding to the 30S ribosomal subunits. Also involved in the hydrolysis of GTP during the formation of the 70S ribosomal complex. The protein is Translation initiation factor IF-2 of Salmonella choleraesuis (strain SC-B67).